We begin with the raw amino-acid sequence, 115 residues long: MSNGQSVKAVAKYVRISPHKVRQVLDQIRGRSYQEALMILEFLPYDAGSPIWQVVHSVAANAKNNYNLDKKKLVISEIFADEGPKLKRIRPRAQGRAYKILKPTCHITVVVKSIS.

This sequence belongs to the universal ribosomal protein uL22 family. In terms of assembly, part of the 50S ribosomal subunit.

It localises to the plastid. It is found in the chloroplast. Its function is as follows. This protein binds specifically to 23S rRNA. In terms of biological role, the globular domain of the protein is located near the polypeptide exit tunnel on the outside of the subunit, while an extended beta-hairpin is found that lines the wall of the exit tunnel in the center of the 70S ribosome. This chain is Large ribosomal subunit protein uL22c (rpl22), found in Thalassiosira pseudonana (Marine diatom).